The following is a 98-amino-acid chain: DNA-binding protein Fis (98 aa).

Residues 74-93 constitute a DNA-binding region (H-T-H motif); the sequence is QTRAATMLGINRGTLRKKLK.

This sequence belongs to the transcriptional regulatory Fis family. Homodimer.

Its function is as follows. Activates ribosomal RNA transcription. Plays a direct role in upstream activation of rRNA promoters. This is DNA-binding protein Fis from Glaesserella parasuis serovar 5 (strain SH0165) (Haemophilus parasuis).